The primary structure comprises 860 residues: Leucine--tRNA ligase (860 aa).

The 'HIGH' region motif lies at 42-52 (PYPSGRLHMGH). Residues 619-623 (KMSKS) carry the 'KMSKS' region motif. Lys-622 lines the ATP pocket.

It belongs to the class-I aminoacyl-tRNA synthetase family.

The protein resides in the cytoplasm. The enzyme catalyses tRNA(Leu) + L-leucine + ATP = L-leucyl-tRNA(Leu) + AMP + diphosphate. In Histophilus somni (strain 129Pt) (Haemophilus somnus), this protein is Leucine--tRNA ligase.